The following is a 688-amino-acid chain: Glycine--tRNA ligase beta subunit (688 aa).

This sequence belongs to the class-II aminoacyl-tRNA synthetase family. In terms of assembly, tetramer of two alpha and two beta subunits.

Its subcellular location is the cytoplasm. It carries out the reaction tRNA(Gly) + glycine + ATP = glycyl-tRNA(Gly) + AMP + diphosphate. The sequence is that of Glycine--tRNA ligase beta subunit from Clostridioides difficile (strain 630) (Peptoclostridium difficile).